The chain runs to 688 residues: Probable glucan endo-1,3-beta-glucosidase btgC (688 aa).

3 disordered regions span residues 1-91, 126-148, and 168-195; these read MSGP…NLGP, ANIPAERGLSTTGSDNPYVPEPP, and GQLTPGQSVSHLSSTNPSQRNLYDIPYQ. The Cytoplasmic portion of the chain corresponds to 1–307; that stretch reads MSGPNRTYSF…PKPGGGNKKR (307 aa). Over residues 175 to 188 the composition is skewed to polar residues; the sequence is SVSHLSSTNPSQRN. Residues 308 to 328 form a helical; Signal-anchor for type II membrane protein membrane-spanning segment; that stretch reads GWIVGAILAFIIIGAIVGGAV. Residues 329–688 lie on the Extracellular side of the membrane; sequence GGTIGHRGNE…IPDCGGKTAT (360 aa). Positions 334 to 363 are disordered; the sequence is HRGNEEPSSASSASSSSTQTATEDTSVNGD. The span at 341–355 shows a compositional bias: low complexity; the sequence is SSASSASSSSTQTAT. N-linked (GlcNAc...) asparagine glycans are attached at residues Asn408, Asn431, and Asn459. The active-site Proton donor is the Glu491. The Nucleophile role is filled by Glu590. Residues Asn609 and Asn635 are each glycosylated (N-linked (GlcNAc...) asparagine).

It belongs to the glycosyl hydrolase 17 family.

The protein localises to the cell membrane. The enzyme catalyses Hydrolysis of (1-&gt;3)-beta-D-glucosidic linkages in (1-&gt;3)-beta-D-glucans.. Glucanases play a role in cell expansion during growth, in cell-cell fusion during mating, and in spore release during sporulation. This enzyme may be involved in beta-glucan degradation. Active on laminarin and lichenan. The protein is Probable glucan endo-1,3-beta-glucosidase btgC (btgC) of Aspergillus fumigatus (strain ATCC MYA-4609 / CBS 101355 / FGSC A1100 / Af293) (Neosartorya fumigata).